A 262-amino-acid polypeptide reads, in one-letter code: MPDSPTDLRSAFRSGRVTPTAGLAPGFAQTNLIAVPQDWAYDVLLFTQRNPKPCPVLDVGDAGSRTTMLAPGADITTDLPLYRVWKDGELADETADVSSLWRDDLVAFHIGCSFTFEHPVAAAGVPLRHVEQGSNVPMYVTDRECRPAGRVSGPMVVSMRPVPEHQVSLAAAISARMPAVHGGPVHIGDPTELGIADLGAPDFGDPVNLEPGDVPMFWACGVTPQAAVMASRLPFAITHAPGYMLITDTPDSEYVLEVPDAR.

This sequence belongs to the D-glutamate cyclase family.

In Rhodococcus opacus (strain B4), this protein is Putative hydro-lyase ROP_32680.